Here is a 339-residue protein sequence, read N- to C-terminus: MKPKSKVAESTAASCFLVMSLLCSCIIGDQMETNNEGLSYSYYEKTCPKVEEIVRSSLSSMFILDPTSPAALLRLMFHDCQVQGCDASILLEPIRDQQFTELDSAKNFGIRKRDLVGSIKTSLELECPKQVSCSDVIILAARDAVALTGGPLISVPLGRKDSLSTPSKHVADSELPPSTADVDTTLSLFANKGMTIEESVAIMGAHTIGVTHCNNVLSRFDNANATSENMDPRFQTFLRVACPEFSPTSQAAEATFVPNDQTSVIFDTAYYDDAIAGRGNLRIDSEIGADPRTRPFVEAFAADQDRFFNAFSSAFVKLSSYKVLTGNEGVIRSVCDKVD.

An N-terminal signal peptide occupies residues 1–28 (MKPKSKVAESTAASCFLVMSLLCSCIIG). 4 disulfides stabilise this stretch: cysteine 47–cysteine 127, cysteine 80–cysteine 85, cysteine 133–cysteine 335, and cysteine 213–cysteine 242. The active-site Proton acceptor is histidine 78. Positions 79, 82, 84, 86, and 88 each coordinate Ca(2+). A substrate-binding site is contributed by proline 176. Residue histidine 206 participates in heme b binding. A Ca(2+)-binding site is contributed by threonine 207. Asparagine 224 carries N-linked (GlcNAc...) asparagine glycosylation. Ca(2+)-binding residues include aspartate 260, threonine 262, and aspartate 267.

It belongs to the peroxidase family. Classical plant (class III) peroxidase subfamily. Heme b serves as cofactor. Requires Ca(2+) as cofactor.

Its subcellular location is the secreted. The enzyme catalyses 2 a phenolic donor + H2O2 = 2 a phenolic radical donor + 2 H2O. Removal of H(2)O(2), oxidation of toxic reductants, biosynthesis and degradation of lignin, suberization, auxin catabolism, response to environmental stresses such as wounding, pathogen attack and oxidative stress. These functions might be dependent on each isozyme/isoform in each plant tissue. The protein is Peroxidase 29 (PER29) of Arabidopsis thaliana (Mouse-ear cress).